The following is a 489-amino-acid chain: Lysine--tRNA ligase (489 aa).

Mg(2+)-binding residues include glutamate 399 and glutamate 406.

It belongs to the class-II aminoacyl-tRNA synthetase family. In terms of assembly, homodimer. The cofactor is Mg(2+).

The protein localises to the cytoplasm. It carries out the reaction tRNA(Lys) + L-lysine + ATP = L-lysyl-tRNA(Lys) + AMP + diphosphate. The sequence is that of Lysine--tRNA ligase from Roseiflexus sp. (strain RS-1).